A 355-amino-acid polypeptide reads, in one-letter code: 3'-5' exonuclease (355 aa).

The interval 1 to 121 is disordered; the sequence is MDKYLIKLPN…PSPEKEKPEK (121 aa). 3 stretches are compositionally biased toward basic and acidic residues: residues 17–29, 36–50, and 72–92; these read VSDK…KETP, AKKD…KENT, and KNLD…ENPP. Phosphoserine occurs at positions 105 and 113. A 3'-5' exonuclease domain is found at 147–315; it reads VMQWVEKQKE…GQVIYRDLEQ (169 aa). Mg(2+)-binding residues include Asp-164, Glu-166, and Asp-302.

This sequence belongs to the WRNexo family.

Its subcellular location is the nucleus. Has exonuclease activity on both single-stranded and duplex templates bearing overhangs, but not blunt ended duplex DNA, and cleaves in a 3'-5' direction. Essential for the formation of DNA replication focal centers. Has an important role in maintaining genome stability. This is 3'-5' exonuclease from Drosophila ananassae (Fruit fly).